The following is a 393-amino-acid chain: Protein TsgA homolog (393 aa).

Transmembrane regions (helical) follow at residues 11–31, 51–71, 78–98, 101–121, 134–154, 162–182, 206–226, 245–265, 273–293, 297–317, 332–352, and 361–381; these read WISFLSYALTGALVIVTGMVM, FLNAGILISIFLNAWLMEIIP, FGFVLMVLAVAGLMLSHSLAL, AAMFVLGLVSGITMSIGTFLI, LLFTDSFFSMAGMIFPMVAAY, WYWVYACIGLVYVAIFILTFG, IGVLFLSIAALCYILGQLGFI, TLVSDFWMSYMFGMWAFSFIL, ILTVLAGLAAVLMYLFIKAQP, AWFILTLGFFSSAIYTSIITL, FVLTCGTIGTMLTFVVTGPIV, and LLTANGLYAVVFVMCFILGFV.

The protein belongs to the major facilitator superfamily. TsgA family.

Its subcellular location is the cell inner membrane. This chain is Protein TsgA homolog, found in Citrobacter koseri (strain ATCC BAA-895 / CDC 4225-83 / SGSC4696).